Here is a 1061-residue protein sequence, read N- to C-terminus: Lysine-specific demethylase jmjd-3.1 (1061 aa).

2 disordered regions span residues 30–49 (VKNS…MRPV) and 256–417 (KSLS…KRRT). A compositionally biased stretch (polar residues) spans 271-287 (QHTNSVGSSIGTTSGDS). Over residues 310–320 (STSSEFTETTS) the composition is skewed to low complexity. The span at 321 to 330 (VANQTESNAG) shows a compositional bias: polar residues. Residues 369–417 (KKKEQSATEPPIPRTKRAYTKNPNTIRKRRMKKNQSDDEEDDGPPKRRT) are required for nuclear localization. The required for binding of unc-3 and for function in Y-to-PDA transdifferentiation stretch occupies residues 418–759 (INYQIEFRDA…FGTNIDLLSE (342 aa)). The JmjC domain occupies 760-923 (NFKKQMNEIE…LATSIVAHDH (164 aa)). Fe cation is bound by residues His811, Glu813, and His891. Residues Cys998, Cys1001, Cys1025, and Cys1028 each contribute to the Zn(2+) site.

Belongs to the UTX family. As to quaternary structure, interacts with wdr-5.1 and unc-3. Fe(2+) is required as a cofactor. As to expression, mainly expressed in head and tail.

The protein localises to the nucleus. In terms of biological role, histone demethylase that specifically demethylates trimethylated 'Lys-27' of histone H3, a mark associated with transcriptional repression, thereby playing a central role in the histone code. Involved in the transcriptional regulation of the heat shock response, unfolded protein response and possibly other stress response target genes. Required for gonad development and organization. Required for the robust transdifferentiation of the Y rectal epithelial cell to the PDA motor neuron during larval development. Acts cell-autonomously in Y-to-PDA transdifferentiation, which depends on the demethylase activity and on recognition of the H3 tail. Cooperates with set-2 and unc-3 to ensure robust Y-to-PDA transdifferentiation. Promotes mitochondrial stress-induced longevity. Involved in lifespan regulation. This is Lysine-specific demethylase jmjd-3.1 from Caenorhabditis elegans.